Reading from the N-terminus, the 425-residue chain is tRNA(Ile)-lysidine synthase (425 aa).

An ATP-binding site is contributed by 27–32 (SGGLDS).

This sequence belongs to the tRNA(Ile)-lysidine synthase family.

It is found in the cytoplasm. It catalyses the reaction cytidine(34) in tRNA(Ile2) + L-lysine + ATP = lysidine(34) in tRNA(Ile2) + AMP + diphosphate + H(+). Ligates lysine onto the cytidine present at position 34 of the AUA codon-specific tRNA(Ile) that contains the anticodon CAU, in an ATP-dependent manner. Cytidine is converted to lysidine, thus changing the amino acid specificity of the tRNA from methionine to isoleucine. In Streptococcus pneumoniae (strain Hungary19A-6), this protein is tRNA(Ile)-lysidine synthase.